Reading from the N-terminus, the 147-residue chain is Protein BUD31 homolog (147 aa).

The short motif at 8–12 is the Nuclear localization signal element; the sequence is RRVRK.

This sequence belongs to the BUD31 (G10) family. Identified in the spliceosome C complex.

The protein resides in the nucleus. Functionally, involved in pre-mRNA splicing process. The polypeptide is Protein BUD31 homolog (Caenorhabditis elegans).